Reading from the N-terminus, the 3391-residue chain is Genome polyprotein (3391 aa).

An interaction with host EXOC1 region spans residues 1 to 15 (MNDQRKKAKNTPFNM). Residues 1-101 (MNDQRKKAKN…LNILNRRRRS (101 aa)) are Cytoplasmic-facing. Residues 37–72 (MLQGRGPLKLYMALVAFLRFLTIPPTAGILKRWGTI) form a hydrophobic; homodimerization of capsid protein C region. Residues 101-114 (SAGMIIMLIPTVMA) constitute a propeptide, ER anchor for the capsid protein C, removed in mature form by serine protease NS3. Residues 102–119 (AGMIIMLIPTVMAFHLTT) traverse the membrane as a helical segment. Residues 120-242 (RNGEPHMIVS…HVQRIETWIL (123 aa)) are Extracellular-facing. Asparagine 183 carries N-linked (GlcNAc...) asparagine; by host glycosylation. Residues 243 to 260 (RHPGFTMMAAILAYTIGT) form a helical membrane-spanning segment. A topological domain (cytoplasmic) is located at residue threonine 261. The helical transmembrane segment at 262 to 280 (HFQRALIFILLTAVTPSMT) threads the bilayer. Topologically, residues 281–725 (MRCIGMSNRD…LHQVFGAIYG (445 aa)) are extracellular. 4 disulfides stabilise this stretch: cysteine 283–cysteine 310, cysteine 340–cysteine 401, cysteine 354–cysteine 385, and cysteine 372–cysteine 396. A glycan (N-linked (GlcNAc...) asparagine; by host) is linked at asparagine 347. The segment at 378-391 (DRGWGNGCGLFGKG) is fusion peptide. The N-linked (GlcNAc...) asparagine; by host glycan is linked to asparagine 433. 2 disulfides stabilise this stretch: cysteine 465/cysteine 565 and cysteine 582/cysteine 613. A helical transmembrane segment spans residues 726-746 (AAFSGVSWTMKILIGVIITWI). Residues 747–752 (GMNSRS) are Cytoplasmic-facing. The helical transmembrane segment at 753–773 (TSLSVTLVLVGIVTLYLGVMV) threads the bilayer. The Extracellular portion of the chain corresponds to 774–1195 (QADSGCVVSW…MVGATMTDDI (422 aa)). Cystine bridges form between cysteine 779–cysteine 790, cysteine 830–cysteine 918, cysteine 954–cysteine 998, cysteine 1055–cysteine 1104, cysteine 1066–cysteine 1088, and cysteine 1087–cysteine 1091. N-linked (GlcNAc...) asparagine; by host glycans are attached at residues asparagine 905 and asparagine 982. N-linked (GlcNAc...) asparagine; by host glycans are attached at residues asparagine 1134 and asparagine 1174. The chain crosses the membrane as a helical span at residues 1196–1220 (GMGVTYLALLAAFKVRPTFAAGLLL). Residues 1221–1226 (RKLTSK) are Cytoplasmic-facing. A helical membrane pass occupies residues 1227 to 1245 (ALMMTTIGIVLSSQSTTPE). Over 1246 to 1269 (TILELTDALALGMMVLKMVRNMEK) the chain is Lumenal. The chain crosses the membrane as a helical span at residues 1270 to 1290 (YQLAVTIMAILCVPNAVILQN). A topological domain (cytoplasmic) is located at residue alanine 1291. Residues 1292–1310 (WKVSCTILAVVSVSPLFLT) traverse the membrane as a helical segment. At 1311-1317 (SSQQKTD) the chain is on the lumenal side. A helical transmembrane segment spans residues 1318 to 1338 (WIPLALTIKGLNPTAIFLTTL). Residues 1339–1346 (SRTSKKRS) lie on the Cytoplasmic side of the membrane. A helical membrane pass occupies residues 1347–1367 (WPLNEAIMAVGMVSILASSLL). Residues 1368 to 1370 (KND) lie on the Lumenal side of the membrane. A helical membrane pass occupies residues 1371-1391 (IPMTGPLVAGGPLTVCYVLTG). Over 1392-1447 (RSADLELERAADVKWEDQAEISGSSPILSITISEDGSMSIKNEEEEQTLTILIRTG) the chain is Cytoplasmic. Residues 1398-1437 (LERAADVKWEDQAEISGSSPILSITISEDGSMSIKNEEEE) form an interacts with and activates NS3 protease region. The segment at residues 1448–1468 (LLVISGLFPVSIPITAAAWYL) is an intramembrane region (helical). Over 1469–2147 (WEVKKQRAGV…LSELPETLET (679 aa)) the chain is Cytoplasmic. In terms of domain architecture, Peptidase S7 spans 1476–1653 (AGVLWDVPSP…EKSIEDNPEI (178 aa)). Catalysis depends on charge relay system; for serine protease NS3 activity residues histidine 1526, aspartate 1550, and serine 1610. In terms of domain architecture, Helicase ATP-binding spans 1655-1811 (DDIFRKRRLT…QSNAPIIDEE (157 aa)). The segment at 1659–1662 (RKRR) is important for RNA-binding. ATP is bound at residue 1668–1675 (LHPGAGKT). The DEAH box motif lies at 1759–1762 (DEAH). One can recognise a Helicase C-terminal domain in the interval 1821-1988 (SGHEWVTDFK…IIPSMFEPER (168 aa)). The residue at position 1863 (lysine 1863) is an N6-acetyllysine; by host. The helical transmembrane segment at 2148-2168 (LLLLTLLATVTGGILLFLMSG) threads the bilayer. Residues 2169–2170 (RG) lie on the Lumenal side of the membrane. An intramembrane region (helical) is located at residues 2171–2191 (IGKMTLGMCCIITASILLWYA). Residue glutamine 2192 is a topological domain, lumenal. Residues 2193-2213 (IQPHWIAASIILEFFLIVLLI) traverse the membrane as a helical segment. Residues 2214–2228 (PEPEKQRTPQDNQLT) lie on the Cytoplasmic side of the membrane. The chain crosses the membrane as a helical span at residues 2229–2249 (YVVIAILTVVAATMANEMGFL). The Lumenal portion of the chain corresponds to 2250–2274 (EKTKKDLGLGSIATQQPESNILDID). Residues 2275–2295 (LRPASAWTLYAVATTFVTPML) constitute an intramembrane region (helical). Residues 2296-2316 (RHSIENSSVNVSLTAIANQAT) lie on the Lumenal side of the membrane. N-linked (GlcNAc...) asparagine; by host glycans are attached at residues asparagine 2301 and asparagine 2305. Positions 2317 to 2337 (VLMGLGKGWPLSKMDIGVPLL) form an intramembrane region, helical. At 2338 to 2347 (AIGCYSQVNP) the chain is on the lumenal side. Residues 2348-2368 (TTLTAALFLLVAHYAIIGPAL) form a helical membrane-spanning segment. At 2369–2413 (QAKASREAQKRAAAGIMKNPTVDGITVIDLDPIPYDPKFEKQLGQ) the chain is on the cytoplasmic side. Residues 2414–2434 (VMLLVLCVTQVLMMRTTWALC) form a helical membrane-spanning segment. The Lumenal segment spans residues 2435-2459 (EVLTLATGPISTLWEGNPGRFWNTT). N-linked (GlcNAc...) asparagine; by host glycosylation occurs at asparagine 2457. A helical transmembrane segment spans residues 2460–2480 (IAVSMANIFRGSYLAGAGLLF). The Cytoplasmic portion of the chain corresponds to 2481-3391 (SIMKNTTNAR…REEEEAGVLW (911 aa)). In terms of domain architecture, mRNA cap 0-1 NS5-type MT spans 2493 to 2755 (TGNIGETLGE…DVDLGSGTRN (263 aa)). Position 2547 (serine 2547) interacts with S-adenosyl-L-methionine. At serine 2547 the chain carries Phosphoserine. Residue lysine 2552 is the For 2'-O-MTase activity of the active site. Positions 2568–2571 (VVDL) match the SUMO-interacting motif motif. S-adenosyl-L-methionine contacts are provided by glycine 2577, tryptophan 2578, threonine 2595, lysine 2596, aspartate 2622, and valine 2623. Aspartate 2637 functions as the For 2'-O-MTase activity in the catalytic mechanism. Isoleucine 2638 lines the S-adenosyl-L-methionine pocket. Residues lysine 2672 and glutamate 2708 each act as for 2'-O-MTase activity in the active site. Tyrosine 2710 is an S-adenosyl-L-methionine binding site. Zn(2+) is bound by residues glutamate 2929, histidine 2933, cysteine 2938, and cysteine 2941. One can recognise a RdRp catalytic domain in the interval 3020–3169 (AMYADDTAGW…PLDDRLPSAL (150 aa)). Zn(2+) contacts are provided by histidine 3203, cysteine 3219, and cysteine 3338.

The protein in the N-terminal section; belongs to the class I-like SAM-binding methyltransferase superfamily. mRNA cap 0-1 NS5-type methyltransferase family. Homodimer. Interacts (via N-terminus) with host EXOC1 (via C-terminus); this interaction results in EXOC1 degradation through the proteasome degradation pathway. In terms of assembly, forms heterodimers with envelope protein E in the endoplasmic reticulum and Golgi. As to quaternary structure, homodimer; in the endoplasmic reticulum and Golgi. Interacts with protein prM. Interacts with non-structural protein 1. Homodimer; Homohexamer when secreted. Interacts with envelope protein E. Interacts with host PRKAA1. In terms of assembly, interacts (via N-terminus) with serine protease NS3. As to quaternary structure, forms a heterodimer with serine protease NS3. May form homooligomers. Forms a heterodimer with NS2B. Interacts with NS4B. Interacts with unphosphorylated RNA-directed RNA polymerase NS5; this interaction stimulates RNA-directed RNA polymerase NS5 guanylyltransferase activity. Interacts with host SHFL. In terms of assembly, interacts with host MAVS; this interaction inhibits the synthesis of IFN-beta. Interacts with host SHFL. Interacts with host AUP1; the interaction occurs in the presence of Dengue virus NS4B and induces lipophagy which facilitates production of virus progeny particles. May interact with host SRPRA and SEC61G. As to quaternary structure, interacts with serine protease NS3. Homodimer. Interacts with host STAT2; this interaction inhibits the phosphorylation of the latter, and, when all viral proteins are present (polyprotein), targets STAT2 for degradation. Interacts with serine protease NS3. Interacts with host PAF1 complex; the interaction may prevent the recruitment of the PAF1 complex to interferon-responsive genes, and thus reduces the immune response. In terms of processing, specific enzymatic cleavages in vivo yield mature proteins. Cleavages in the lumen of endoplasmic reticulum are performed by host signal peptidase, whereas cleavages in the cytoplasmic side are performed by serine protease NS3. Signal cleavage at the 2K-4B site requires a prior NS3 protease-mediated cleavage at the 4A-2K site. Post-translationally, cleaved in post-Golgi vesicles by a host furin, releasing the mature small envelope protein M, and peptide pr. This cleavage is incomplete as up to 30% of viral particles still carry uncleaved prM. N-glycosylated. In terms of processing, N-glycosylated. The excreted form is glycosylated and this is required for efficient secretion of the protein from infected cells. Post-translationally, acetylated by host KAT5. Acetylation modulates NS3 RNA-binding and unwinding activities and plays an important positive role for viral replication. Sumoylation of RNA-directed RNA polymerase NS5 increases NS5 protein stability allowing proper viral RNA replication. In terms of processing, phosphorylated on serines residues. This phosphorylation may trigger NS5 nuclear localization.

Its subcellular location is the virion. It localises to the host nucleus. It is found in the host cytoplasm. The protein resides in the host perinuclear region. The protein localises to the secreted. Its subcellular location is the virion membrane. It localises to the host endoplasmic reticulum membrane. It is found in the host mitochondrion. The enzyme catalyses Selective hydrolysis of -Xaa-Xaa-|-Yaa- bonds in which each of the Xaa can be either Arg or Lys and Yaa can be either Ser or Ala.. The catalysed reaction is RNA(n) + a ribonucleoside 5'-triphosphate = RNA(n+1) + diphosphate. It carries out the reaction a ribonucleoside 5'-triphosphate + H2O = a ribonucleoside 5'-diphosphate + phosphate + H(+). It catalyses the reaction ATP + H2O = ADP + phosphate + H(+). The enzyme catalyses a 5'-end (5'-triphosphoguanosine)-ribonucleoside in mRNA + S-adenosyl-L-methionine = a 5'-end (N(7)-methyl 5'-triphosphoguanosine)-ribonucleoside in mRNA + S-adenosyl-L-homocysteine. The catalysed reaction is a 5'-end (N(7)-methyl 5'-triphosphoguanosine)-ribonucleoside in mRNA + S-adenosyl-L-methionine = a 5'-end (N(7)-methyl 5'-triphosphoguanosine)-(2'-O-methyl-ribonucleoside) in mRNA + S-adenosyl-L-homocysteine + H(+). Its function is as follows. Plays a role in virus budding by binding to the cell membrane and gathering the viral RNA into a nucleocapsid that forms the core of a mature virus particle. During virus entry, may induce genome penetration into the host cytoplasm after hemifusion induced by the surface proteins. Can migrate to the cell nucleus where it modulates host functions. Overcomes the anti-viral effects of host EXOC1 by sequestering and degrading the latter through the proteasome degradation pathway. Functionally, inhibits RNA silencing by interfering with host Dicer. In terms of biological role, prevents premature fusion activity of envelope proteins in trans-Golgi by binding to envelope protein E at pH6.0. After virion release in extracellular space, gets dissociated from E dimers. Acts as a chaperone for envelope protein E during intracellular virion assembly by masking and inactivating envelope protein E fusion peptide. prM is the only viral peptide matured by host furin in the trans-Golgi network probably to avoid catastrophic activation of the viral fusion activity in acidic Golgi compartment prior to virion release. prM-E cleavage is inefficient, and many virions are only partially matured. These uncleaved prM would play a role in immune evasion. Its function is as follows. May play a role in virus budding. Exerts cytotoxic effects by activating a mitochondrial apoptotic pathway through M ectodomain. May display a viroporin activity. Functionally, binds to host cell surface receptor and mediates fusion between viral and cellular membranes. Envelope protein is synthesized in the endoplasmic reticulum in the form of heterodimer with protein prM. They play a role in virion budding in the ER, and the newly formed immature particle is covered with 60 spikes composed of heterodimer between precursor prM and envelope protein E. The virion is transported to the Golgi apparatus where the low pH causes dissociation of PrM-E heterodimers and formation of E homodimers. prM-E cleavage is inefficient, and many virions are only partially matured. These uncleaved prM would play a role in immune evasion. In terms of biological role, involved in immune evasion, pathogenesis and viral replication. Once cleaved off the polyprotein, is targeted to three destinations: the viral replication cycle, the plasma membrane and the extracellular compartment. Essential for viral replication. Required for formation of the replication complex and recruitment of other non-structural proteins to the ER-derived membrane structures. Excreted as a hexameric lipoparticle that plays a role against host immune response. Antagonizing the complement function. Binds to the host macrophages and dendritic cells. Inhibits signal transduction originating from Toll-like receptor 3 (TLR3). Involved in immune evasion, pathogenesis and viral replication. Once cleaved off the polyprotein, is targeted to three destinations: the viral replication cycle, the plasma membrane and the extracellular compartment. Essential for viral replication. Required for formation of the replication complex and recruitment of other non-structural proteins to the ER-derived membrane structures. Excreted as a hexameric lipoparticle that plays a role against host immune response. Antagonizing the complement function. Binds to the host macrophages and dendritic cells. Inhibits signal transduction originating from Toll-like receptor 3 (TLR3). Mediates complement activation, which may contribute to the pathogenesis of the vascular leakage that occurs in severe dengue disease. Activates autophagy through the AMPK/ERK/mTOR signaling pathway. Mechanistically, acts as the assembly platform for STK11-AMPK interactions and promotes STK11-AMPK interactions. In turn, promotes phosphorylation of the AMPK kinase structural domain and activates AMPK, thereby positively regulating the AMPK/ERK/mTOR signaling pathway and inducing autophagy. Its function is as follows. Component of the viral RNA replication complex that functions in virion assembly and antagonizes the host immune response. Functionally, required cofactor for the serine protease function of NS3. May have membrane-destabilizing activity and form viroporins. In terms of biological role, displays three enzymatic activities: serine protease, NTPase and RNA helicase. NS3 serine protease, in association with NS2B, performs its autocleavage and cleaves the polyprotein at dibasic sites in the cytoplasm: C-prM, NS2A-NS2B, NS2B-NS3, NS3-NS4A, NS4A-2K and NS4B-NS5. NS3 RNA helicase binds RNA and unwinds dsRNA in the 3' to 5' direction. Regulates the ATPase activity of the NS3 helicase activity. NS4A allows NS3 helicase to conserve energy during unwinding. Plays a role in the inhibition of the host innate immune response. Interacts with host MAVS and thereby prevents the interaction between RIGI and MAVS. In turn, IFN-beta production is impaired. Interacts with host AUP1 which mediates induction of lipophagy in host cells and facilitates production of virus progeny particles. Its function is as follows. Functions as a signal peptide for NS4B and is required for the interferon antagonism activity of the latter. Functionally, induces the formation of ER-derived membrane vesicles where the viral replication takes place. Inhibits interferon (IFN)-induced host STAT1 phosphorylation and nuclear translocation, thereby preventing the establishment of cellular antiviral state by blocking the IFN-alpha/beta pathway. In terms of biological role, replicates the viral (+) and (-) RNA genome, and performs the capping of genomes in the cytoplasm. NS5 methylates viral RNA cap at guanine N-7 and ribose 2'-O positions. Besides its role in RNA genome replication, also prevents the establishment of cellular antiviral state by blocking the interferon-alpha/beta (IFN-alpha/beta) signaling pathway. Inhibits host TYK2 and STAT2 phosphorylation, thereby preventing activation of JAK-STAT signaling pathway. May reduce immune responses by preventing the recruitment of the host PAF1 complex to interferon-responsive genes. The protein is Genome polyprotein of Aedes aegypti (Yellowfever mosquito).